The following is a 320-amino-acid chain: uncharacterized protein (320 aa).

The protein to S.pombe SpAC23H3.12c.

This is an uncharacterized protein from Saccharomyces cerevisiae (strain ATCC 204508 / S288c) (Baker's yeast).